A 91-amino-acid chain; its full sequence is Putative regulatory protein Helmi_20580 (91 aa).

Belongs to the RemA family.

The protein is Putative regulatory protein Helmi_20580 of Heliobacterium modesticaldum (strain ATCC 51547 / Ice1).